A 419-amino-acid polypeptide reads, in one-letter code: Circumsporozoite protein (419 aa).

Residues 1–23 (MKNFNLLAVSSILLVDLFRTHWG) form the signal peptide. The disordered stretch occupies residues 50–111 (AQVRQSASRG…GNAGGNAGGN (62 aa)). Basic and acidic residues predominate over residues 65-95 (NPKEEDGADKKKKKDEKQVEPKKPRENKLKQ). The segment at 81-89 (KQVEPKKPR) is required for the binding to heparan sulfate proteoglycans (HSPGs) on the surface of host hepatocytes. The region I; contains the proteolytic cleavage site stretch occupies residues 92 to 96 (KLKQP). Tandem repeats lie at residues 99–102 (NADG), 103–106 (NAGG), 107–110 (NAGG), 111–114 (NAGG), 115–118 (NAGG), 119–122 (NAGG), 123–126 (NADG), 127–130 (NAGG), 131–134 (NAGG), 135–138 (NAGG), 139–142 (NAGG), 143–146 (NAGG), 147–150 (NADG), 151–154 (NAGG), 155–158 (NADG), 159–162 (NAGG), 163–166 (NADG), 167–170 (NAGG), 171–174 (NAGG), 175–178 (NAGG), 179–182 (NADG), 183–186 (NAGG), 187–190 (NAGG), 191–194 (NAGG), 195–198 (NAGG), 199–202 (NAGG), 203–206 (NAGG), 207–210 (NAGG), 211–214 (NADG), 215–218 (NAGG), 219–222 (NAGG), 223–226 (NAGG), 227–230 (NADG), 231–234 (NAGG), 235–238 (NAGG), 239–242 (NAGG), 243–246 (NAGG), and 247–250 (NAGG). The 54 X 4 AA approximate tandem repeats of N-A-G-G stretch occupies residues 99-314 (NADGNAGGNA…GGNAGANAGN (216 aa)). Residues 146 to 237 (GNADGNAGGN…ADGNAGGNAG (92 aa)) are disordered. The stretch at 251–254 (TAGG) is one 39; approximate repeat. A run of 13 repeats spans residues 255–258 (NADG), 259–262 (NAGG), 263–266 (NAGG), 267–270 (NAGG), 271–274 (NAGG), 275–278 (NAGG), 279–282 (NAGG), 283–286 (NAGG), 287–290 (NAGG), 291–294 (NAGG), 295–298 (NAGG), 299–302 (NAGG), and 303–306 (NAGG). The stretch at 307–310 (NAGA) is one 53; approximate repeat. One copy of the 54; approximate repeat lies at 311–314 (NAGN). Positions 312-332 (AGNKKAGDAGAGQGQNNEAAN) are disordered. Positions 345-397 (KIRSTISTEWSPCSVTCGKGVRMRKKVSAANKKPEELDVNDLETEVCTMDKCA) constitute a TSP type-1 domain. Cystine bridges form between C357–C391 and C361–C396. O-linked (Fuc) threonine glycosylation occurs at T360. C396 is lipidated: GPI-anchor amidated cysteine. The propeptide at 397–419 (AGIFNVVSNSLRLVILLVLALFN) is removed in mature form.

The protein belongs to the plasmodium circumsporozoite protein family. Post-translationally, during host cell invasion, proteolytically cleaved at the cell membrane in the region I by a papain-like cysteine protease of parasite origin. Cleavage is triggered by the sporozoite contact with highly sulfated heparan sulfate proteoglycans (HSPGs) present on the host hepatocyte cell surface. Cleavage exposes the TSP type-1 (TSR) domain and is required for productive invasion of host hepatocytes but not for adhesion to the host cell membrane. Cleavage is dispensable for sporozoite development in the oocyst, motility and for traversal of host and vector cells. In terms of processing, O-glycosylated; maybe by POFUT2.

It is found in the cell membrane. Its subcellular location is the cytoplasm. Functionally, essential sporozoite protein. In the mosquito vector, required for sporozoite development in the oocyst, migration through the vector hemolymph and entry into the vector salivary glands. In the vertebrate host, required for sporozoite migration through the host dermis and infection of host hepatocytes. Binds to highly sulfated heparan sulfate proteoglycans (HSPGs) on the surface of host hepatocytes. Its function is as follows. In the vertebrate host, binds to highly sulfated heparan sulfate proteoglycans (HSPGs) on the surface of host hepatocytes and is required for sporozoite invasion of the host hepatocytes. The polypeptide is Circumsporozoite protein (Plasmodium cynomolgi (strain Mulligan/NIH)).